A 321-amino-acid chain; its full sequence is CRISPR system ring nuclease SSO1393 (321 aa).

This sequence belongs to the cOA ring nuclease family. As to quaternary structure, homodimer. It depends on Does not require a metal cofactor. as a cofactor.

The protein resides in the cytoplasm. It catalyses the reaction cyclic tetraadenylate = 2 5'-hydroxy-diadenylate 2',3'-cylic phosphate. CRISPR (clustered regularly interspaced short palindromic repeat) is an adaptive immune system that provides protection against mobile genetic elements (viruses, transposable elements and conjugative plasmids). CRISPR clusters contain spacers, sequences complementary to antecedent mobile elements, and target invading nucleic acids. CRISPR clusters are transcribed and processed into CRISPR RNA (crRNA). A nuclease that degrades cyclic oligoadenylates (cOA), second messengers that induce an antiviral state important for defense against invading nucleic acids. Destruction of cOA deactivates the Csx1 ribonuclease, preventing uncontrolled degradation of cellular RNA. Slowly degrades cA4 (a tetraadenylate ring) into first a linear tetraadenylate product and secondly into a linear diadenylate product with 5'-OH and 2',3'-cyclic phosphate termini. Is 10-fold less active than SSO2081, suggesting it plays a minor role in cA4 degradation. There may be 2 active sites per homodimer. The sequence is that of CRISPR system ring nuclease SSO1393 from Saccharolobus solfataricus (strain ATCC 35092 / DSM 1617 / JCM 11322 / P2) (Sulfolobus solfataricus).